A 90-amino-acid chain; its full sequence is UPF0297 protein lwe1516 (90 aa).

Belongs to the UPF0297 family.

The polypeptide is UPF0297 protein lwe1516 (Listeria welshimeri serovar 6b (strain ATCC 35897 / DSM 20650 / CCUG 15529 / CIP 8149 / NCTC 11857 / SLCC 5334 / V8)).